The chain runs to 361 residues: Outer mitochondrial transmembrane helix translocase (361 aa).

The Mitochondrial intermembrane segment spans residues 1–15 (MVHAEAFSRPLSRNE). The helical transmembrane segment at 16–32 (VVGLIFRLTIFGAVTYF) threads the bilayer. The Cytoplasmic portion of the chain corresponds to 33–361 (TIKWMVDAID…QNVLTHVCLD (329 aa)). 133–140 (GPPGCGKT) provides a ligand contact to ATP. Phosphoserine is present on Ser322.

The protein belongs to the AAA ATPase family. MSP1 subfamily. As to quaternary structure, interacts with GRIA2 and GRIP1 in an ATP-dependent manner. ATAD1-catalyzed ATP hydrolysis disrupts not only its binding to GRIA2 and GRIP1, but also interaction between GRIP1 and GRIA2, leading to AMPAR complex disassembly.

Its subcellular location is the mitochondrion outer membrane. The protein resides in the peroxisome membrane. It is found in the postsynaptic cell membrane. It carries out the reaction [protein]-with a C-terminal TM segment(out) + ATP + H2O = [protein]-with a C-terminal TM segment(in) + ADP + phosphate + H(+). In terms of biological role, outer mitochondrial translocase required to remove mislocalized tail-anchored transmembrane proteins on mitochondria. Specifically recognizes and binds tail-anchored transmembrane proteins: acts as a dislocase that mediates the ATP-dependent extraction of mistargeted tail-anchored transmembrane proteins from the mitochondrion outer membrane. Also plays a critical role in regulating the surface expression of AMPA receptors (AMPAR), thereby regulating synaptic plasticity and learning and memory. Required for NMDA-stimulated AMPAR internalization and inhibition of GRIA1 and GRIA2 recycling back to the plasma membrane; these activities are ATPase-dependent. This chain is Outer mitochondrial transmembrane helix translocase, found in Homo sapiens (Human).